A 394-amino-acid chain; its full sequence is Ceramide glucosyltransferase (394 aa).

The Lumenal portion of the chain corresponds to 1–10 (MALLDLAQEG). The chain crosses the membrane as a helical span at residues 11 to 32 (MALFGFVLFVVLWLMHFMSIIY). At 33–195 (TRLHLNKKAT…QVYFGTSHPR (163 aa)) the chain is on the cytoplasmic side. A short sequence motif (D1) is located at residue D92. The residue at position 117 (K117) is an N6-acetyllysine. D144 is a short sequence motif (D2). Residues 196–215 (SYISANVTGFKCVTGMSCLM) traverse the membrane as a helical segment. Topologically, residues 216–287 (RKDVLDQAGG…KLRINMLPAT (72 aa)) are lumenal. A short sequence motif (D3) is located at residue D236. D236 (proton acceptor) is an active-site residue. The (Q/R)XXRW signature appears at 272–276 (RMIRW). The chain crosses the membrane as a helical span at residues 288-304 (IICEPISECFVASLIIG). At 305-309 (WAAHH) the chain is on the cytoplasmic side. The chain crosses the membrane as a helical span at residues 310 to 328 (VFRWDIMVFFMCHCLAWFI). Residues 329-348 (FDYIQLRGVQGGTLCFSKLD) are Lumenal-facing. The helical transmembrane segment at 349 to 369 (YAVAWFIRESMTIYIFLSALW) threads the bilayer. Residues 370-394 (DPTISWRTGRYRLRCGGTAEEILDV) lie on the Cytoplasmic side of the membrane.

Belongs to the glycosyltransferase 2 family. In terms of assembly, interacts with RTN1; regulates the ceramide glucosyltransferase activity of UGCG.

It is found in the golgi apparatus membrane. It catalyses the reaction an N-acylsphing-4-enine + UDP-alpha-D-glucose = a beta-D-glucosyl-(1&lt;-&gt;1')-N-acylsphing-4-enine + UDP + H(+). The enzyme catalyses UDP-alpha-D-xylose + an N-acylsphing-4-enine = a beta-D-xylosyl-(1&lt;-&gt;1')-N-acylsphing-4-enine + UDP + H(+). It carries out the reaction N-(9Z-octadecenoyl)-sphing-4-enine + UDP-alpha-D-xylose = beta-D-xylosyl-(1&lt;-&gt;1')-N-(9Z-octadecenoyl)-sphing-4-enine + UDP + H(+). Its pathway is lipid metabolism; sphingolipid metabolism. Participates in the initial step of the glucosylceramide-based glycosphingolipid/GSL synthetic pathway at the cytosolic surface of the Golgi. Catalyzes the transfer of glucose from UDP-glucose to ceramide to produce glucosylceramide/GlcCer (such as beta-D-glucosyl-(1&lt;-&gt;1')-N-acylsphing-4-enine). Glucosylceramide is the core component of glycosphingolipids/GSLs, amphipathic molecules consisting of a ceramide lipid moiety embedded in the outer leaflet of the membrane, linked to one of hundreds of different externally oriented oligosaccharide structures. Glycosphingolipids are essential components of membrane microdomains that mediate membrane trafficking and signal transduction. They are implicated in many fundamental cellular processes, including growth, differentiation, migration, morphogenesis, cell-to-cell and cell-to-matrix interactions. They are required for instance in the proper development and functioning of the nervous system. As an example of their role in signal transduction, they regulate the leptin receptor/LEPR in the leptin-mediated signaling pathway. They also play an important role in the establishment of the skin barrier regulating keratinocyte differentiation and the proper assembly of the cornified envelope. The biosynthesis of GSLs is also required for the proper intestinal endocytic uptake of nutritional lipids. Catalyzes the synthesis of xylosylceramide/XylCer (such as beta-D-xylosyl-(1&lt;-&gt;1')-N-acylsphing-4-enine) using UDP-Xyl as xylose donor. The polypeptide is Ceramide glucosyltransferase (Mus musculus (Mouse)).